The sequence spans 224 residues: UPF0758 protein PFLU_5982 (224 aa).

One can recognise an MPN domain in the interval 102–224 (VLESPKAVRD…PLSMAEYGWL (123 aa)). 3 residues coordinate Zn(2+): histidine 173, histidine 175, and aspartate 186. Residues 173–186 (HNHPSGSLEPSAAD) carry the JAMM motif motif.

Belongs to the UPF0758 family.

This Pseudomonas fluorescens (strain SBW25) protein is UPF0758 protein PFLU_5982.